The chain runs to 315 residues: Probable HTH-type transcriptional regulator SinR (315 aa).

One can recognise an HTH lysR-type domain in the interval 8–65; that stretch reads RGMRDWMIFIKVAEVGNLSRAARELDISISAVSKSLSRLENSIEVTLLRRDSHHLELT. The H-T-H motif DNA-binding region spans 25-44; the sequence is LSRAARELDISISAVSKSLS.

Belongs to the LysR transcriptional regulatory family.

Probable regulatory protein. Its target is not known. This Salmonella typhimurium (strain LT2 / SGSC1412 / ATCC 700720) protein is Probable HTH-type transcriptional regulator SinR (sinR).